A 278-amino-acid chain; its full sequence is Sulfur carrier protein FdhD (278 aa).

The Cysteine persulfide intermediate role is filled by Cys-117.

It belongs to the FdhD family.

The protein localises to the cytoplasm. Required for formate dehydrogenase (FDH) activity. Acts as a sulfur carrier protein that transfers sulfur from IscS to the molybdenum cofactor prior to its insertion into FDH. This is Sulfur carrier protein FdhD from Variovorax paradoxus (strain S110).